A 155-amino-acid chain; its full sequence is Large ribosomal subunit protein uL11 (155 aa).

The protein belongs to the universal ribosomal protein uL11 family. As to quaternary structure, part of the ribosomal stalk of the 50S ribosomal subunit. Interacts with L10 and the large rRNA to form the base of the stalk. L10 forms an elongated spine to which L12 dimers bind in a sequential fashion forming a multimeric L10(L12)X complex.

Functionally, forms part of the ribosomal stalk which helps the ribosome interact with GTP-bound translation factors. This chain is Large ribosomal subunit protein uL11, found in Picrophilus torridus (strain ATCC 700027 / DSM 9790 / JCM 10055 / NBRC 100828 / KAW 2/3).